The chain runs to 496 residues: 2,3-bisphosphoglycerate-independent phosphoglycerate mutase (496 aa).

Residues aspartate 12 and serine 62 each contribute to the Mn(2+) site. Serine 62 acts as the Phosphoserine intermediate in catalysis. Substrate is bound by residues histidine 121, 150–151 (RD), arginine 181, arginine 187, 252–255 (RNDR), and lysine 317. Mn(2+)-binding residues include aspartate 384, histidine 388, aspartate 425, histidine 426, and histidine 444.

Belongs to the BPG-independent phosphoglycerate mutase family. Monomer. Requires Mn(2+) as cofactor.

It carries out the reaction (2R)-2-phosphoglycerate = (2R)-3-phosphoglycerate. It participates in carbohydrate degradation; glycolysis; pyruvate from D-glyceraldehyde 3-phosphate: step 3/5. Catalyzes the interconversion of 2-phosphoglycerate and 3-phosphoglycerate. The polypeptide is 2,3-bisphosphoglycerate-independent phosphoglycerate mutase (Anaplasma phagocytophilum (strain HZ)).